A 541-amino-acid chain; its full sequence is Neutral amino acid transporter B(0) (541 aa).

Residue methionine 1 is modified to N-acetylmethionine. A compositionally biased stretch (basic and acidic residues) spans 1–10 (MVADPPKGDP). The interval 1–32 (MVADPPKGDPKGLAAVEPTANGAPAQDPLEDS) is disordered. Residues 1 to 52 (MVADPPKGDPKGLAAVEPTANGAPAQDPLEDSGAAVGRCCSSRDQVRRCLRA) are Cytoplasmic-facing. A helical membrane pass occupies residues 53–82 (NLLVLLTVVAVVAGVALGLAVSGAGGALAL). Topologically, residues 83 to 95 (GPARLIAFAFPGE) are extracellular. A helical transmembrane segment spans residues 96–117 (LLLRLLKMIILPLVVCSLVGGA). Topologically, residues 118–131 (ASLDPSALGRLGAW) are cytoplasmic. A helical membrane pass occupies residues 132–154 (ALLFFLVTTLLASALGVGLALAL). Over 155-225 (QPGAAFAAMN…GTLVKVPVAH (71 aa)) the chain is Extracellular. Asparagine 164 and asparagine 215 each carry an N-linked (GlcNAc...) asparagine glycan. A helical membrane pass occupies residues 226 to 249 (EEEGMNILGLVVFAIVFGVALRKL). Topologically, residues 250 to 258 (GPEGEPLIR) are cytoplasmic. A helical transmembrane segment spans residues 259–286 (FFNSFNDATMVLVSWIMWYAPVGILFLV). Topologically, residues 287–307 (ASKIVEMDDVGVLFASLGKYI) are extracellular. Residues 308–329 (LCCLLGHAIHGLLVLPLIYFLF) traverse the membrane as a helical segment. Residues 330–334 (TRKNP) lie on the Cytoplasmic side of the membrane. Positions 335–365 (YRFLWGILTPLAMAFGTSSSSATLPLMMKCV) form an intramembrane region, discontinuously helical. At 366 to 374 (EERNGVAKH) the chain is on the cytoplasmic side. Residues 375–401 (ISRFVLPIGATVNMDGAALFQCVAAVF) form a helical membrane-spanning segment. Glycine 383, threonine 385, and asparagine 387 together coordinate Na(+). Topologically, residues 402 to 414 (IAQLNRQSLDFVK) are extracellular. The segment at residues 415–448 (IITILVTATASSVGAAGIPAGGVLTLAIILEAVS) is an intramembrane region (discontinuously helical). At 449 to 461 (LPVSEISLILAVD) the chain is on the extracellular side. A helical membrane pass occupies residues 462–483 (WLVDRSCTIINVEGDAFGAGLL). Na(+) is bound by residues asparagine 472 and aspartate 476. Residues 484–541 (QHYVDRTEQRGSEPELTQVKSEVPLGSLPAPNEEGNPLLRHSPGAAGDAGACEKESVM) are Cytoplasmic-facing. Residues 493–541 (RGSEPELTQVKSEVPLGSLPAPNEEGNPLLRHSPGAAGDAGACEKESVM) form a disordered region. Phosphoserine occurs at positions 495, 504, and 539.

The protein belongs to the dicarboxylate/amino acid:cation symporter (DAACS) (TC 2.A.23) family. SLC1A5 subfamily. As to quaternary structure, homotrimer.

The protein localises to the cell membrane. The protein resides in the melanosome. The catalysed reaction is L-glutamine(out) + L-serine(in) + Na(+)(out) = L-glutamine(in) + L-serine(out) + Na(+)(in). The enzyme catalyses L-glutamine(in) + L-serine(out) + Na(+)(out) = L-glutamine(out) + L-serine(in) + Na(+)(in). It carries out the reaction L-threonine(in) + L-glutamine(out) + Na(+)(out) = L-threonine(out) + L-glutamine(in) + Na(+)(in). It catalyses the reaction L-threonine(out) + L-glutamine(in) + Na(+)(out) = L-threonine(in) + L-glutamine(out) + Na(+)(in). The catalysed reaction is L-asparagine(in) + L-glutamine(out) + Na(+)(out) = L-asparagine(out) + L-glutamine(in) + Na(+)(in). The enzyme catalyses L-asparagine(out) + L-glutamine(in) + Na(+)(out) = L-asparagine(in) + L-glutamine(out) + Na(+)(in). It carries out the reaction L-glutamine(in) + L-alanine(out) + Na(+)(out) = L-glutamine(out) + L-alanine(in) + Na(+)(in). It catalyses the reaction L-valine(out) + L-glutamine(in) + Na(+)(out) = L-valine(in) + L-glutamine(out) + Na(+)(in). The catalysed reaction is L-glutamine(in) + L-methionine(out) + Na(+)(out) = L-glutamine(out) + L-methionine(in) + Na(+)(in). The enzyme catalyses L-glutamine(in) + L-glutamate(out) + Na(+)(out) + H(+)(out) = L-glutamine(out) + L-glutamate(in) + Na(+)(in) + H(+)(in). It carries out the reaction D-serine(in) + L-glutamine(out) + Na(+)(out) = D-serine(out) + L-glutamine(in) + Na(+)(in). It catalyses the reaction D-serine(in) + L-alanine(out) + Na(+)(out) = D-serine(out) + L-alanine(in) + Na(+)(in). The catalysed reaction is nitrate(in) = nitrate(out). The enzyme catalyses iodide(out) = iodide(in). It carries out the reaction thiocyanate(in) = thiocyanate(out). Functionally, sodium-coupled antiporter of neutral amino acids. In a tri-substrate transport cycle, exchanges neutral amino acids between the extracellular and intracellular compartments, coupled to the inward cotransport of at least one sodium ion. The preferred substrate is the essential amino acid L-glutamine, a precursor for biosynthesis of proteins, nucleotides and amine sugars as well as an alternative fuel for mitochondrial oxidative phosphorylation. Exchanges L-glutamine with other neutral amino acids such as L-serine, L-threonine and L-asparagine in a bidirectional way. Provides L-glutamine to proliferating stem and activated cells driving the metabolic switch toward cell differentiation. The transport cycle is usually pH-independent, with the exception of L-glutamate. Transports extracellular L-glutamate coupled to the cotransport of one proton and one sodium ion in exchange for intracellular L-glutamine counter-ion. May provide for L-glutamate uptake in glial cells regulating glutamine/glutamate cycle in the nervous system. Can transport D-amino acids. Mediates D-serine release from the retinal glia potentially affecting NMDA receptor function in retinal neurons. Displays sodium- and amino acid-dependent but uncoupled channel-like anion conductance with a preference SCN(-) &gt;&gt; NO3(-) &gt; I(-) &gt; Cl(-). Through binding of the fusogenic protein syncytin-1/ERVW-1 may mediate trophoblasts syncytialization, the spontaneous fusion of their plasma membranes, an essential process in placental development. The polypeptide is Neutral amino acid transporter B(0) (SLC1A5) (Oryctolagus cuniculus (Rabbit)).